Consider the following 210-residue polypeptide: Na(+)-translocating NADH-quinone reductase subunit D (210 aa).

Transmembrane regions (helical) follow at residues P14 to V34, L42 to I62, I72 to A92, V103 to M123, F131 to V151, and N178 to I198.

It belongs to the NqrDE/RnfAE family. In terms of assembly, composed of six subunits; NqrA, NqrB, NqrC, NqrD, NqrE and NqrF.

The protein resides in the cell inner membrane. The enzyme catalyses a ubiquinone + n Na(+)(in) + NADH + H(+) = a ubiquinol + n Na(+)(out) + NAD(+). Functionally, NQR complex catalyzes the reduction of ubiquinone-1 to ubiquinol by two successive reactions, coupled with the transport of Na(+) ions from the cytoplasm to the periplasm. NqrA to NqrE are probably involved in the second step, the conversion of ubisemiquinone to ubiquinol. The sequence is that of Na(+)-translocating NADH-quinone reductase subunit D from Shewanella putrefaciens (strain CN-32 / ATCC BAA-453).